The primary structure comprises 86 residues: Neurotoxin 3FTx-8a (86 aa).

The first 21 residues, 1 to 21 (MKTLLLTLVVVTIVCLDLGYT), serve as a signal peptide directing secretion. Cystine bridges form between Cys24-Cys45, Cys27-Cys32, Cys38-Cys63, Cys67-Cys78, and Cys79-Cys84.

In terms of tissue distribution, expressed by the venom gland.

It is found in the secreted. In terms of biological role, binds with low affinity to muscular (alpha-1-beta-1-delta-epsilon/CHRNA1-CHRNB1-CHRND-CHRNE) and very low affinity to neuronal (alpha-7/CHRNA7) nicotinic acetylcholine receptor (nAChR). The protein is Neurotoxin 3FTx-8a of Bungarus fasciatus (Banded krait).